Consider the following 196-residue polypeptide: ATP-dependent Clp protease proteolytic subunit (196 aa).

Catalysis depends on serine 96, which acts as the Nucleophile. Histidine 121 is a catalytic residue.

It belongs to the peptidase S14 family. In terms of assembly, fourteen ClpP subunits assemble into 2 heptameric rings which stack back to back to give a disk-like structure with a central cavity, resembling the structure of eukaryotic proteasomes.

The protein localises to the cytoplasm. The catalysed reaction is Hydrolysis of proteins to small peptides in the presence of ATP and magnesium. alpha-casein is the usual test substrate. In the absence of ATP, only oligopeptides shorter than five residues are hydrolyzed (such as succinyl-Leu-Tyr-|-NHMec, and Leu-Tyr-Leu-|-Tyr-Trp, in which cleavage of the -Tyr-|-Leu- and -Tyr-|-Trp bonds also occurs).. Its function is as follows. Cleaves peptides in various proteins in a process that requires ATP hydrolysis. Has a chymotrypsin-like activity. Plays a major role in the degradation of misfolded proteins. The sequence is that of ATP-dependent Clp protease proteolytic subunit from Streptococcus pneumoniae (strain ATCC 700669 / Spain 23F-1).